Consider the following 320-residue polypeptide: Dermonecrotic toxin LarSicTox-alphaIB2a (320 aa).

The first 15 residues, 1 to 15 (MSHSSTALLHPYVAA), serve as a signal peptide directing secretion. Positions 16–41 (RATEKFAPIYFFCHPLQSAETDVAER) are excised as a propeptide. H52 is a catalytic residue. Mg(2+)-binding residues include E72 and D74. The active-site Nucleophile is the H88. Cystine bridges form between C92–C98 and C94–C237. Position 132 (D132) interacts with Mg(2+). An N-linked (GlcNAc...) asparagine glycan is attached at N297.

The protein belongs to the arthropod phospholipase D family. Class II subfamily. Mg(2+) is required as a cofactor. Expressed by the venom gland.

It localises to the secreted. It carries out the reaction an N-(acyl)-sphingosylphosphocholine = an N-(acyl)-sphingosyl-1,3-cyclic phosphate + choline. The enzyme catalyses an N-(acyl)-sphingosylphosphoethanolamine = an N-(acyl)-sphingosyl-1,3-cyclic phosphate + ethanolamine. It catalyses the reaction a 1-acyl-sn-glycero-3-phosphocholine = a 1-acyl-sn-glycero-2,3-cyclic phosphate + choline. The catalysed reaction is a 1-acyl-sn-glycero-3-phosphoethanolamine = a 1-acyl-sn-glycero-2,3-cyclic phosphate + ethanolamine. In terms of biological role, dermonecrotic toxins cleave the phosphodiester linkage between the phosphate and headgroup of certain phospholipids (sphingolipid and lysolipid substrates), forming an alcohol (often choline) and a cyclic phosphate. This toxin acts on sphingomyelin (SM). It may also act on ceramide phosphoethanolamine (CPE), lysophosphatidylcholine (LPC) and lysophosphatidylethanolamine (LPE), but not on lysophosphatidylserine (LPS), and lysophosphatidylglycerol (LPG). It acts by transphosphatidylation, releasing exclusively cyclic phosphate products as second products. Induces dermonecrosis, hemolysis, increased vascular permeability, edema, inflammatory response, and platelet aggregation. This is Dermonecrotic toxin LarSicTox-alphaIB2a from Loxosceles arizonica (Arizona brown spider).